The following is a 482-amino-acid chain: UDP-N-acetylmuramate--L-alanine ligase (482 aa).

Position 122–128 (122–128) interacts with ATP; it reads GTHGKTT.

The protein belongs to the MurCDEF family.

The protein resides in the cytoplasm. The enzyme catalyses UDP-N-acetyl-alpha-D-muramate + L-alanine + ATP = UDP-N-acetyl-alpha-D-muramoyl-L-alanine + ADP + phosphate + H(+). Its pathway is cell wall biogenesis; peptidoglycan biosynthesis. Its function is as follows. Cell wall formation. This Mycolicibacterium smegmatis (strain ATCC 700084 / mc(2)155) (Mycobacterium smegmatis) protein is UDP-N-acetylmuramate--L-alanine ligase.